The chain runs to 439 residues: GTPase Obg (439 aa).

The Obg domain occupies 1-159; sequence MAFVDQAEIE…RKLKLELKVL (159 aa). The OBG-type G domain maps to 160-336; the sequence is ADVGLVGFPS…LMRLTADLLA (177 aa). GTP-binding positions include 166 to 173, 191 to 195, 213 to 216, 283 to 286, and 317 to 319; these read GFPSAGKS, FTTLS, DLPG, TKMD, and SAL. 2 residues coordinate Mg(2+): Ser173 and Thr193. One can recognise an OCT domain in the interval 358–439; sequence DFKPEQHNFT…NSDFVFEFSD (82 aa).

This sequence belongs to the TRAFAC class OBG-HflX-like GTPase superfamily. OBG GTPase family. Monomer. It depends on Mg(2+) as a cofactor.

The protein resides in the cytoplasm. An essential GTPase which binds GTP, GDP and possibly (p)ppGpp with moderate affinity, with high nucleotide exchange rates and a fairly low GTP hydrolysis rate. Plays a role in control of the cell cycle, stress response, ribosome biogenesis and in those bacteria that undergo differentiation, in morphogenesis control. The polypeptide is GTPase Obg (Leuconostoc citreum (strain KM20)).